We begin with the raw amino-acid sequence, 175 residues long: Large ribosomal subunit protein uL10 (175 aa).

The protein belongs to the universal ribosomal protein uL10 family. In terms of assembly, part of the ribosomal stalk of the 50S ribosomal subunit. The N-terminus interacts with L11 and the large rRNA to form the base of the stalk. The C-terminus forms an elongated spine to which L12 dimers bind in a sequential fashion forming a multimeric L10(L12)X complex.

In terms of biological role, forms part of the ribosomal stalk, playing a central role in the interaction of the ribosome with GTP-bound translation factors. The sequence is that of Large ribosomal subunit protein uL10 from Thermobifida fusca (strain YX).